The sequence spans 122 residues: Large ribosomal subunit protein uL14 (122 aa).

This sequence belongs to the universal ribosomal protein uL14 family. Part of the 50S ribosomal subunit. Forms a cluster with proteins L3 and L19. In the 70S ribosome, L14 and L19 interact and together make contacts with the 16S rRNA in bridges B5 and B8.

Binds to 23S rRNA. Forms part of two intersubunit bridges in the 70S ribosome. The chain is Large ribosomal subunit protein uL14 from Fervidobacterium nodosum (strain ATCC 35602 / DSM 5306 / Rt17-B1).